The primary structure comprises 751 residues: Diamine oxidase [copper-containing] (751 aa).

An N-terminal signal peptide occupies residues Met1–Ala22. Asn61 and Asn110 each carry an N-linked (GlcNAc...) asparagine glycan. Asp373 serves as the catalytic Proton acceptor. A disulfide bridge connects residues Cys391 and Cys417. The active-site Schiff-base intermediate with substrate; via topaquinone is the Tyr461. Tyr461 bears the 2',4',5'-topaquinone mark. The Cu(2+) site is built by His510 and His512. The Ca(2+) site is built by Asp519, Leu520, and Asp521. The N-linked (GlcNAc...) asparagine glycan is linked to Asn538. Residues Glu562, Phe653, Asn656, Glu658, Asp664, and Leu665 each coordinate Ca(2+). Cu(2+) is bound at residue His675. N-linked (GlcNAc...) asparagine glycosylation is present at Asn745.

The protein belongs to the copper/topaquinone oxidase family. In terms of assembly, homodimer; disulfide-linked. It depends on Cu(2+) as a cofactor. Ca(2+) serves as cofactor. L-topaquinone is required as a cofactor. Topaquinone (TPQ) is generated by copper-dependent autoxidation of a specific tyrosyl residue. In terms of processing, N-glycosylated.

Its subcellular location is the secreted. The protein resides in the extracellular space. The protein localises to the cell membrane. It carries out the reaction histamine + O2 + H2O = imidazole-4-acetaldehyde + H2O2 + NH4(+). The enzyme catalyses N(tau)-methylhistamine + O2 + H2O = 1-methylimidazole-4-acetaldehyde + H2O2 + NH4(+). It catalyses the reaction putrescine + O2 + H2O = 4-aminobutanal + H2O2 + NH4(+). The catalysed reaction is cadaverine + O2 + H2O = 5-aminopentanal + H2O2 + NH4(+). Inhibited by amiloride and amiloride analogs. In terms of biological role, catalyzes the oxidative deamination of primary amines to the corresponding aldehydes with the concomitant production of hydrogen peroxide and ammonia. Its preferred substrates in vitro are the diamines histamine and 1-methylhistamine and it could therefore play a role in allergic and immune responses. Has a broad specificity for diamines and can also act on cadaverine and putrescine, two products of amino acid catabolism. It could also act on polyamines, like spermidine and spermine though less efficiently, and regulate various biological processes. In Mus musculus (Mouse), this protein is Diamine oxidase [copper-containing].